The following is a 531-amino-acid chain: Retinoid isomerohydrolase (531 aa).

C112 is lipidated: S-palmitoyl cysteine; in membrane form. The Fe cation site is built by H180, H241, and H313. C329 is lipidated: S-palmitoyl cysteine; in membrane form. H526 is a Fe cation binding site.

This sequence belongs to the carotenoid oxygenase family. It depends on Fe(2+) as a cofactor. Palmitoylated. As to expression, retinal pigment epithelium-specific.

It is found in the cytoplasm. The protein resides in the cell membrane. It carries out the reaction an all-trans-retinyl ester + H2O = 11-cis-retinol + a fatty acid + H(+). It catalyses the reaction lutein = (3R,3'S)-zeaxanthin. The enzyme catalyses all-trans-retinyl hexadecanoate + H2O = 11-cis-retinol + hexadecanoate + H(+). In terms of biological role, plays important roles in the production of 11-cis retinal and in visual pigment regeneration. Capable of catalyzing the isomerization of lutein to meso-zeaxanthin an eye-specific carotenoid. This is Retinoid isomerohydrolase (rpe65a) from Danio rerio (Zebrafish).